The primary structure comprises 132 residues: ATP synthase epsilon chain, chloroplastic (132 aa).

The residue at position 2 (Thr2) is an N-acetylthreonine.

This sequence belongs to the ATPase epsilon chain family. In terms of assembly, F-type ATPases have 2 components, CF(1) - the catalytic core - and CF(0) - the membrane proton channel. CF(1) has five subunits: alpha(3), beta(3), gamma(1), delta(1), epsilon(1). CF(0) has three main subunits: a, b and c.

Its subcellular location is the plastid. The protein localises to the chloroplast thylakoid membrane. In terms of biological role, produces ATP from ADP in the presence of a proton gradient across the membrane. This chain is ATP synthase epsilon chain, chloroplastic, found in Arabidopsis thaliana (Mouse-ear cress).